The sequence spans 245 residues: Phosphoribosylaminoimidazole-succinocarboxamide synthase (245 aa).

Belongs to the SAICAR synthetase family.

The enzyme catalyses 5-amino-1-(5-phospho-D-ribosyl)imidazole-4-carboxylate + L-aspartate + ATP = (2S)-2-[5-amino-1-(5-phospho-beta-D-ribosyl)imidazole-4-carboxamido]succinate + ADP + phosphate + 2 H(+). Its pathway is purine metabolism; IMP biosynthesis via de novo pathway; 5-amino-1-(5-phospho-D-ribosyl)imidazole-4-carboxamide from 5-amino-1-(5-phospho-D-ribosyl)imidazole-4-carboxylate: step 1/2. The polypeptide is Phosphoribosylaminoimidazole-succinocarboxamide synthase (Nostoc sp. (strain PCC 7120 / SAG 25.82 / UTEX 2576)).